A 475-amino-acid chain; its full sequence is tRNA-2-methylthio-N(6)-dimethylallyladenosine synthase (475 aa).

The MTTase N-terminal domain occupies 7-127 (RKLHIKSYGC…LPKLLAKARD (121 aa)). Positions 16, 52, 90, 168, 172, and 175 each coordinate [4Fe-4S] cluster. The 235-residue stretch at 154–388 (RARGVSAFVT…AQLQALIDAQ (235 aa)) folds into the Radical SAM core domain. The TRAM domain occupies 394–456 (RAAIGRTVEV…RYSLKGRLAS (63 aa)).

The protein belongs to the methylthiotransferase family. MiaB subfamily. As to quaternary structure, monomer. Requires [4Fe-4S] cluster as cofactor.

It localises to the cytoplasm. It catalyses the reaction N(6)-dimethylallyladenosine(37) in tRNA + (sulfur carrier)-SH + AH2 + 2 S-adenosyl-L-methionine = 2-methylsulfanyl-N(6)-dimethylallyladenosine(37) in tRNA + (sulfur carrier)-H + 5'-deoxyadenosine + L-methionine + A + S-adenosyl-L-homocysteine + 2 H(+). Catalyzes the methylthiolation of N6-(dimethylallyl)adenosine (i(6)A), leading to the formation of 2-methylthio-N6-(dimethylallyl)adenosine (ms(2)i(6)A) at position 37 in tRNAs that read codons beginning with uridine. The protein is tRNA-2-methylthio-N(6)-dimethylallyladenosine synthase of Afipia carboxidovorans (strain ATCC 49405 / DSM 1227 / KCTC 32145 / OM5) (Oligotropha carboxidovorans).